Consider the following 829-residue polypeptide: G-type lectin S-receptor-like serine/threonine-protein kinase At1g34300 (829 aa).

A signal peptide spans 1–25 (MAVKTPFLKLLPLLLLLLHFPFSFS). Bulb-type lectin domains are found at residues 26-140 (TIPL…SSFD) and 143-260 (TDTI…PVNA). Over 26–421 (TIPLGSVIYA…KGDDNNSKVH (396 aa)) the chain is Extracellular. N-linked (GlcNAc...) asparagine glycosylation is found at Asn46, Asn98, Asn130, Asn151, Asn172, Asn178, Asn189, and Asn195. The 38-residue stretch at 264 to 301 (AVDQCLVYGYCGNFGICSYNDTNPICSCPSRNFDFVDV) folds into the EGF-like domain. Intrachain disulfides connect Cys268-Cys280, Cys274-Cys289, Cys317-Cys399, Cys350-Cys373, and Cys354-Cys360. N-linked (GlcNAc...) asparagine glycosylation is found at Asn283 and Asn320. Positions 317-399 (CSGNTTMLDL…VPSTSYVKVC (83 aa)) constitute an Apple domain. Asn416 carries an N-linked (GlcNAc...) asparagine glycan. The chain crosses the membrane as a helical span at residues 422-442 (LWIVAVAVIAGLLGLVAVEIG). Residues 443–829 (LWWCCCRKNP…RISEGSMLGS (387 aa)) lie on the Cytoplasmic side of the membrane. A Protein kinase domain is found at 484–759 (KSFKEKLGAG…GKVVQMLEGI (276 aa)). Residues 490–498 (LGAGGFGTV) and Lys512 contribute to the ATP site. Ser532 is modified (phosphoserine). Residues 572-589 (DSAKFLTWEYRFNIALGT) are caM-binding. Asp608 functions as the Proton acceptor in the catalytic mechanism. 2 positions are modified to phosphoserine: Ser625 and Ser799.

It belongs to the protein kinase superfamily. Ser/Thr protein kinase family.

The protein resides in the cell membrane. The enzyme catalyses L-seryl-[protein] + ATP = O-phospho-L-seryl-[protein] + ADP + H(+). It carries out the reaction L-threonyl-[protein] + ATP = O-phospho-L-threonyl-[protein] + ADP + H(+). In Arabidopsis thaliana (Mouse-ear cress), this protein is G-type lectin S-receptor-like serine/threonine-protein kinase At1g34300.